A 270-amino-acid chain; its full sequence is MWLLVSVILISRISSVGGEAMFCDFPKINHGILYDEEKYKPFSQVPTGEVFYYSCEYNFVSPSKSFWTRITCAEEGWSPTPKCLRLCFFPFVENGHSESSGQTHLEGDTVQIICNTGYRLQNNENNISCVERGWSTPPKCRSTISAEKCGPPPPIDNGDITSFLLSVYAPGSSVEYQCQNLYQLEGNNQITCRNGQWSEPPKCLDPCVISQEIMEKYNIKLKWTNQQKLYSRTGDIVEFVCKSGYHPTKSHSFRAMCQNGKLVYPSCEEK.

The first 18 residues, methionine 1–glycine 18, serve as a signal peptide directing secretion. Sushi domains follow at residues phenylalanine 22–leucine 84, arginine 85–serine 142, glutamate 147–aspartate 205, and proline 206–glutamate 268. 8 cysteine pairs are disulfide-bonded: cysteine 23/cysteine 72, cysteine 55/cysteine 83, cysteine 87/cysteine 129, cysteine 114/cysteine 140, cysteine 149/cysteine 192, cysteine 178/cysteine 203, cysteine 207/cysteine 257, and cysteine 241/cysteine 267. N-linked (GlcNAc...) asparagine glycosylation occurs at asparagine 126.

In terms of assembly, head-to-tail homodimer and heterodimer with CFHR1 or CFHR5. Post-translationally, N-glycosylated. In terms of tissue distribution, expressed by the liver and secreted in plasma.

It localises to the secreted. Involved in complement regulation. The dimerized forms have avidity for tissue-bound complement fragments and efficiently compete with the physiological complement inhibitor CFH. Can associate with lipoproteins and may play a role in lipid metabolism. This chain is Complement factor H-related protein 2 (CFHR2), found in Homo sapiens (Human).